The following is a 314-amino-acid chain: D-alanine--D-alanine ligase (314 aa).

The region spanning 112 to 307 (KQVWQSLGLP…FQQLVLSILD (196 aa)) is the ATP-grasp domain. Position 138–193 (138–193 (AQMLGFPLIVKPAHEGSSIGMAKVGDVAELIAAWRAASAYDAQVLVEQWIQGPEFT)) interacts with ATP. 3 residues coordinate Mg(2+): Asp261, Glu274, and Asn276.

Belongs to the D-alanine--D-alanine ligase family. The cofactor is Mg(2+). Mn(2+) is required as a cofactor.

The protein localises to the cytoplasm. It catalyses the reaction 2 D-alanine + ATP = D-alanyl-D-alanine + ADP + phosphate + H(+). The protein operates within cell wall biogenesis; peptidoglycan biosynthesis. Its function is as follows. Cell wall formation. This Stutzerimonas stutzeri (strain A1501) (Pseudomonas stutzeri) protein is D-alanine--D-alanine ligase.